Here is a 498-residue protein sequence, read N- to C-terminus: ATP synthase subunit beta, chloroplastic (498 aa).

172 to 179 (GGAGVGKT) lines the ATP pocket.

Belongs to the ATPase alpha/beta chains family. F-type ATPases have 2 components, CF(1) - the catalytic core - and CF(0) - the membrane proton channel. CF(1) has five subunits: alpha(3), beta(3), gamma(1), delta(1), epsilon(1). CF(0) has four main subunits: a(1), b(1), b'(1) and c(9-12).

It is found in the plastid. It localises to the chloroplast thylakoid membrane. It catalyses the reaction ATP + H2O + 4 H(+)(in) = ADP + phosphate + 5 H(+)(out). In terms of biological role, produces ATP from ADP in the presence of a proton gradient across the membrane. The catalytic sites are hosted primarily by the beta subunits. In Agrostis stolonifera (Creeping bentgrass), this protein is ATP synthase subunit beta, chloroplastic.